The chain runs to 366 residues: tRNA/tmRNA (uracil-C(5))-methyltransferase (366 aa).

S-adenosyl-L-methionine-binding residues include Gln190, Tyr218, Asn223, Glu239, and Asp299. The active-site Nucleophile is Cys324. Glu358 acts as the Proton acceptor in catalysis.

It belongs to the class I-like SAM-binding methyltransferase superfamily. RNA M5U methyltransferase family. TrmA subfamily.

It catalyses the reaction uridine(54) in tRNA + S-adenosyl-L-methionine = 5-methyluridine(54) in tRNA + S-adenosyl-L-homocysteine + H(+). The catalysed reaction is uridine(341) in tmRNA + S-adenosyl-L-methionine = 5-methyluridine(341) in tmRNA + S-adenosyl-L-homocysteine + H(+). Functionally, dual-specificity methyltransferase that catalyzes the formation of 5-methyluridine at position 54 (m5U54) in all tRNAs, and that of position 341 (m5U341) in tmRNA (transfer-mRNA). This is tRNA/tmRNA (uracil-C(5))-methyltransferase from Citrobacter koseri (strain ATCC BAA-895 / CDC 4225-83 / SGSC4696).